The following is a 119-amino-acid chain: Large ribosomal subunit protein P3z (119 aa).

Positions 79–90 (AGGAASSGGGAG) are enriched in gly residues. A disordered region spans residues 79-119 (AGGAASSGGGAGEAAAAPKEDEKKKEESEEEEGDFGFDLFG). The span at 96–105 (PKEDEKKKEE) shows a compositional bias: basic and acidic residues.

This sequence belongs to the eukaryotic ribosomal protein P1/P2 family. Post-translationally, phosphorylated.

Its function is as follows. Plays an important role in the elongation step of protein synthesis. This is Large ribosomal subunit protein P3z (RPP3A) from Arabidopsis thaliana (Mouse-ear cress).